The sequence spans 784 residues: Homeobox-leucine zipper protein ROC2 (784 aa).

Residues 60–113 are disordered; the sequence is AESGDNMIRSRASDPLGGDEFESKSGSENVDGVSVDDQDPNQRPRKKRYHRHTQ. Positions 102-113 are enriched in basic residues; that stretch reads RPRKKRYHRHTQ. The homeobox DNA-binding region spans 104 to 163; that stretch reads RKKRYHRHTQHQIQEMEAFFKECPHPDDKQRKELSRELGLEPLQVKFWFQNKRTQMKNQH. Positions 158–234 form a coiled coil; sequence QMKNQHERHE…DRISAIAAKY (77 aa). The 238-residue stretch at 286–523 folds into the START domain; sequence SEVDKPMIVE…LDRQCERLAS (238 aa).

This sequence belongs to the HD-ZIP homeobox family. Class IV subfamily.

The protein resides in the nucleus. Probable transcription factor. The polypeptide is Homeobox-leucine zipper protein ROC2 (ROC2) (Oryza sativa subsp. japonica (Rice)).